We begin with the raw amino-acid sequence, 373 residues long: Protein CAF40 (373 aa).

Positions M1 to M91 are disordered. A compositionally biased stretch (gly residues) spans N11–P22. A compositionally biased stretch (low complexity) spans G50 to N88.

The protein belongs to the CNOT9 family. Subunit of the 1.0 MDa CCR4-NOT core complex that contains CCR4, CAF1, NOT1, NOT2, NOT3, NOT4, NOT5, CAF40 and CAF130. In the complex interacts with NOT1. The core complex probably is part of a less characterized 1.9 MDa CCR4-NOT complex.

Its subcellular location is the cytoplasm. The protein resides in the nucleus. Its function is as follows. Acts as a component of the CCR4-NOT core complex, which in the nucleus seems to be a general transcription factor, and in the cytoplasm the major mRNA deadenylase involved in mRNA turnover. This is Protein CAF40 (CAF40) from Saccharomyces cerevisiae (strain ATCC 204508 / S288c) (Baker's yeast).